A 280-amino-acid chain; its full sequence is uncharacterized protein (280 aa).

The HTH rpiR-type domain occupies 1–78 (MDVIQRIKEK…VLLAQSISRA (78 aa)). Residues 37 to 57 (ISDLSEKAGVKSEASVVKFYK) constitute a DNA-binding region (H-T-H motif). Residues 123 to 263 (TVDLFKNAQR…YTLLAARDPR (141 aa)) enclose the SIS domain.

This is an uncharacterized protein from Thermotoga maritima (strain ATCC 43589 / DSM 3109 / JCM 10099 / NBRC 100826 / MSB8).